The sequence spans 162 residues: uncharacterized protein (162 aa).

It belongs to the baculoviridae 19 kDa protein family.

This is an uncharacterized protein from Tortricidae (ClGV).